A 40-amino-acid chain; its full sequence is U2-myrmicitoxin-Tb1a (40 aa).

An N-terminal signal peptide occupies residues 1-3; sequence AEA. A propeptide spanning residues 4-29 is cleaved from the precursor; sequence MAEAMADAMADAMADAMADAMAEAAA. Position 39 is an arginine amide (R39).

The protein belongs to the formicidae venom precursor-01 superfamily. As to expression, expressed by the venom gland.

Its subcellular location is the secreted. In terms of biological role, venom protein with unknown function. Does not induce paralysis when a high dose is administered by intrathoracic injection into the blowfly Lucilia caesar. The sequence is that of U2-myrmicitoxin-Tb1a from Tetramorium bicarinatum (Tramp ant).